Consider the following 305-residue polypeptide: tRNA dimethylallyltransferase (305 aa).

11–18 (GPTAVGKT) provides a ligand contact to ATP. 13 to 18 (TAVGKT) provides a ligand contact to substrate. The tract at residues 36-39 (DSMQ) is interaction with substrate tRNA.

It belongs to the IPP transferase family. Monomer. The cofactor is Mg(2+).

It catalyses the reaction adenosine(37) in tRNA + dimethylallyl diphosphate = N(6)-dimethylallyladenosine(37) in tRNA + diphosphate. Functionally, catalyzes the transfer of a dimethylallyl group onto the adenine at position 37 in tRNAs that read codons beginning with uridine, leading to the formation of N6-(dimethylallyl)adenosine (i(6)A). The polypeptide is tRNA dimethylallyltransferase (Listeria innocua serovar 6a (strain ATCC BAA-680 / CLIP 11262)).